We begin with the raw amino-acid sequence, 290 residues long: Elongation factor Ts, mitochondrial 1 (290 aa).

This sequence belongs to the EF-Ts family.

Its subcellular location is the mitochondrion. Associates with the EF-Tu.GDP complex and induces the exchange of GDP to GTP. It remains bound to the aminoacyl-tRNA.EF-Tu.GTP complex up to the GTP hydrolysis stage on the ribosome. This Postia placenta (strain ATCC 44394 / Madison 698-R) (Brown rot fungus) protein is Elongation factor Ts, mitochondrial 1.